The primary structure comprises 142 residues: Large ribosomal subunit protein uL13 (142 aa).

This sequence belongs to the universal ribosomal protein uL13 family. In terms of assembly, part of the 50S ribosomal subunit.

In terms of biological role, this protein is one of the early assembly proteins of the 50S ribosomal subunit, although it is not seen to bind rRNA by itself. It is important during the early stages of 50S assembly. The polypeptide is Large ribosomal subunit protein uL13 (Cupriavidus metallidurans (strain ATCC 43123 / DSM 2839 / NBRC 102507 / CH34) (Ralstonia metallidurans)).